A 612-amino-acid chain; its full sequence is Threonine--tRNA ligase (612 aa).

The catalytic stretch occupies residues 218–509 (DHRKLGVELG…LSEHFGGNFP (292 aa)). Cysteine 310, histidine 361, and histidine 486 together coordinate Zn(2+).

This sequence belongs to the class-II aminoacyl-tRNA synthetase family. Homodimer. Requires Zn(2+) as cofactor.

Its subcellular location is the cytoplasm. The enzyme catalyses tRNA(Thr) + L-threonine + ATP = L-threonyl-tRNA(Thr) + AMP + diphosphate + H(+). Catalyzes the attachment of threonine to tRNA(Thr) in a two-step reaction: L-threonine is first activated by ATP to form Thr-AMP and then transferred to the acceptor end of tRNA(Thr). Also edits incorrectly charged L-seryl-tRNA(Thr). The polypeptide is Threonine--tRNA ligase (Helicobacter pylori (strain P12)).